A 372-amino-acid chain; its full sequence is Putative actin-27 (372 aa).

Belongs to the actin family.

The protein localises to the cytoplasm. The protein resides in the cytoskeleton. It catalyses the reaction ATP + H2O = ADP + phosphate + H(+). Its function is as follows. Actins are highly conserved proteins that are involved in various types of cell motility and are ubiquitously expressed in all eukaryotic cells. Multiple isoforms are involved in various cellular functions such as cytoskeleton structure, cell mobility, chromosome movement and muscle contraction. This Dictyostelium discoideum (Social amoeba) protein is Putative actin-27 (act27).